We begin with the raw amino-acid sequence, 173 residues long: Lectin BRA-2 (173 aa).

A glycan (N-linked (GlcNAc...) asparagine) is linked at Asn39. 3 cysteine pairs are disulfide-bonded: Cys47–Cys61, Cys78–Cys168, and Cys144–Cys160. Residues 51-170 enclose the C-type lectin domain; the sequence is PNGWVTSENK…NDRYNFVCEI (120 aa).

As to quaternary structure, homohexamer; disulfide-linked. As to expression, coelemic fluid.

In terms of biological role, sugar-binding protein which recognizes specific carbohydrate structures and agglutinates a variety of animal cells by binding to cell-surface glycoproteins and glycolipids. Calcium-dependent lectin. Invertebrate lectins may be involved in defense functions. The protein is Lectin BRA-2 of Megabalanus rosa (Acorn barnacle).